A 564-amino-acid polypeptide reads, in one-letter code: Sulfite reductase [NADPH] hemoprotein beta-component 2 (564 aa).

[4Fe-4S] cluster contacts are provided by Cys426, Cys432, Cys471, and Cys475. Cys475 contacts siroheme.

This sequence belongs to the nitrite and sulfite reductase 4Fe-4S domain family. Alpha(8)-beta(8). The alpha component is a flavoprotein, the beta component is a hemoprotein. Requires siroheme as cofactor. [4Fe-4S] cluster is required as a cofactor.

The catalysed reaction is hydrogen sulfide + 3 NADP(+) + 3 H2O = sulfite + 3 NADPH + 4 H(+). The protein operates within sulfur metabolism; hydrogen sulfide biosynthesis; hydrogen sulfide from sulfite (NADPH route): step 1/1. Component of the sulfite reductase complex that catalyzes the 6-electron reduction of sulfite to sulfide. This is one of several activities required for the biosynthesis of L-cysteine from sulfate. The polypeptide is Sulfite reductase [NADPH] hemoprotein beta-component 2 (Klebsiella pneumoniae (strain 342)).